The sequence spans 389 residues: Leucine aminopeptidase 1 (389 aa).

The N-terminal stretch at 1–18 (MKSAALLLPLYAAAFAAA) is a signal peptide. A propeptide spanning residues 19-89 (AFHHEHAQAV…TLKRRINAAS (71 aa)) is cleaved from the precursor. N-linked (GlcNAc...) asparagine glycosylation occurs at Asn-99. The Zn(2+) site is built by His-188, Asp-207, Glu-246, and Asp-273. Cys-322 and Cys-326 form a disulfide bridge. Residue His-355 coordinates Zn(2+).

Belongs to the peptidase M28 family. M28E subfamily. Monomer. Requires Zn(2+) as cofactor.

It is found in the secreted. Functionally, extracellular aminopeptidase that allows assimilation of proteinaceous substrates. The protein is Leucine aminopeptidase 1 (lap1) of Pyrenophora teres f. teres (strain 0-1) (Barley net blotch fungus).